We begin with the raw amino-acid sequence, 496 residues long: Autophagy-related protein 21 (496 aa).

The interval 41 to 86 (SKKKTSNNNGSASNSESRNNEESILITNGSRDRTDAEEEEDNEDNA) is disordered. Residues 46-57 (SNNNGSASNSES) show a composition bias toward low complexity. Residues 75–84 (DAEEEEDNED) show a composition bias toward acidic residues. Residue threonine 213 is modified to Phosphothreonine. Phosphoserine is present on serine 237. WD repeat units follow at residues 294–334 (VHKG…DYMS), 346–385 (TRLC…NSLP), and 448–488 (VNES…GECV). Positions 342-346 (FRRGT) match the L/FRRG motif motif.

This sequence belongs to the WD repeat PROPPIN family.

It is found in the cytoplasm. The protein resides in the vacuole. Functionally, required for cytoplasm to vacuole transport (Cvt) vesicles formation and mitophagy. Involved in binding of phosphatidylethanolamine to ATG8 and in recruitment of ATG8 and ATG5 to the pre-autophagosomal structure. Protects ATG8 from ARG4-mediated cleavage. Essential for maturation of proaminopeptidase I. The protein is Autophagy-related protein 21 (ATG21) of Saccharomyces cerevisiae (strain ATCC 204508 / S288c) (Baker's yeast).